We begin with the raw amino-acid sequence, 119 residues long: Large ribosomal subunit protein uL18 (119 aa).

Belongs to the universal ribosomal protein uL18 family. Part of the 50S ribosomal subunit; part of the 5S rRNA/L5/L18/L25 subcomplex. Contacts the 5S and 23S rRNAs.

In terms of biological role, this is one of the proteins that bind and probably mediate the attachment of the 5S RNA into the large ribosomal subunit, where it forms part of the central protuberance. The sequence is that of Large ribosomal subunit protein uL18 from Cupriavidus metallidurans (strain ATCC 43123 / DSM 2839 / NBRC 102507 / CH34) (Ralstonia metallidurans).